The following is a 310-amino-acid chain: Probable deoxyhypusine synthase (310 aa).

Residue K284 is the Nucleophile of the active site.

The protein belongs to the deoxyhypusine synthase family. It depends on NAD(+) as a cofactor.

It catalyses the reaction [eIF5A protein]-L-lysine + spermidine = [eIF5A protein]-deoxyhypusine + propane-1,3-diamine. The protein operates within protein modification; eIF5A hypusination. In terms of biological role, catalyzes the NAD-dependent oxidative cleavage of spermidine and the subsequent transfer of the butylamine moiety of spermidine to the epsilon-amino group of a specific lysine residue of the eIF-5A precursor protein to form the intermediate deoxyhypusine residue. The protein is Probable deoxyhypusine synthase (dys) of Thermoplasma acidophilum (strain ATCC 25905 / DSM 1728 / JCM 9062 / NBRC 15155 / AMRC-C165).